We begin with the raw amino-acid sequence, 671 residues long: MVHKKQAWAKRVKKERFKKKFLTRMQATRLLQMESVQFRRLCILKGIYPRALNRSKQKQSGNEKQYYLAREIKWLVRDQIAEKMMAYRAWEKKVKRAEAMGRSEDLKVLQTSRVKPRHSLVATIKERYPYFIDAIRDVDDAMSMIHLYAFLSPEIKSDTTIEIHHSLTSGLSERAKEVCERWDRYVARARVLTKGFISIKGYYYEAIVKGERVRWLCPHEYAHRFPPGIQQYVMLSFLEFYLEMMKFVLFKLESDLARDEADRLAAEDEEGVTRANAEDFANGAALAVLDVGANQAQAKAVKEAESKRSLMEEELHKVRELFRGLTFFISREVPAKHFALVINACGGRVATDYVPSNITHVVVDRPALPPGMKKHDQLEYVQPQYIFDCLNARLVLPVTGYRIGEELPPHVSPFSVSITNSAEDNAAVVQVKKDHPRIVGYVPARVHEIRKLINPSYSAVDPEGKVAHLEDEYSDEESHVAVPEMDMEDDVSLSGDELAEARRKPAWQEEEVTEEVQRPKLSAFKVKKQREMNLMNAPTNEVVARRRQALRKAQEKSRQTETSEARLQRKMSEVKRQEAATRKMQLQVARKKAARFYKMVSGVVQGTAKKVATLEAKAKHIAEGKLRKTEDGKGLVNKRLEARRQRAEAKGKKLKERKAGNPYKKLPKWVQ.

Coiled-coil stretches lie at residues 294–323 (NQAQ…ELFR) and 548–584 (QALR…TRKM). A BRCT domain is found at 317 to 403 (KVRELFRGLT…LVLPVTGYRI (87 aa)). Disordered stretches follow at residues 552 to 577 (KAQE…VKRQ) and 634 to 671 (GLVN…KWVQ). Residues 634 to 651 (GLVNKRLEARRQRAEAKG) show a composition bias toward basic and acidic residues.

This sequence belongs to the pescadillo family.

It localises to the nucleus. It is found in the nucleolus. Its subcellular location is the nucleoplasm. Required for maturation of ribosomal RNAs and formation of the large ribosomal subunit. The protein is Pescadillo homolog of Leishmania major.